Here is a 430-residue protein sequence, read N- to C-terminus: MSIDIDWERATSGPDGELLAERIRSFIHDKFQQIVLPRFIRSVQVTSFNFGTIPPELEIRDLSDPFPDFYEDDDENFSDSSEEGSPTREPVDRYGNRVDSWQANSPGGPGGQMYESNQPLRMPAWEEHTGISPLRGPMNFGDINPYLFPRSGTPGIPGGTSNLGYYMPLSGLSSSQTPLGAVARGNPFSGGWPDAHGARPSRRRSEAEPDSAQSRPSTANTGNTLPSRDSMSISDPHHSHASQGMPNNQGQALEPNIPPTSPNHPLDDTPPRRMREQKAEDFQVFCRTKYAGNISLSLTAEILLDYPMPSFVGLPLKLNITGLTFDAVAVIAYIRRRIHFCFLSPEDADTLMGPETAGGGGGGDTSEPNSSRRKPSSLLREIRVESEIGRKENGKQALKNVGKLEKFVLEQVRRIFEEEFVYPSFWTFLI.

Positions 1–430 (MSIDIDWERA…VYPSFWTFLI (430 aa)) constitute an SMP-LTD domain. 3 disordered regions span residues 61 to 117 (DLSD…YESN), 177 to 276 (TPLG…RMRE), and 352 to 377 (MGPETAGGGGGGDTSEPNSSRRKPSS). Positions 69-82 (FYEDDDENFSDSSE) are enriched in acidic residues. Over residues 85–96 (SPTREPVDRYGN) the composition is skewed to basic and acidic residues. Composition is skewed to polar residues over residues 211–233 (SAQSRPSTANTGNTLPSRDSMSI) and 241–251 (ASQGMPNNQGQ). Positions 265–276 (PLDDTPPRRMRE) are enriched in basic and acidic residues.

Belongs to the MDM12 family. As to quaternary structure, component of the ER-mitochondria encounter structure (ERMES) or MDM complex, composed of MMM1, MDM10, MDM12 and MDM34. An MMM1 homodimer associates with one molecule of MDM12 on each side in a pairwise head-to-tail manner, and the SMP-LTD domains of MMM1 and MDM12 generate a continuous hydrophobic tunnel for phospholipid trafficking.

It localises to the mitochondrion outer membrane. It is found in the endoplasmic reticulum membrane. Component of the ERMES/MDM complex, which serves as a molecular tether to connect the endoplasmic reticulum (ER) and mitochondria. Components of this complex are involved in the control of mitochondrial shape and protein biogenesis, and function in nonvesicular lipid trafficking between the ER and mitochondria. MDM12 is required for the interaction of the ER-resident membrane protein MMM1 and the outer mitochondrial membrane-resident beta-barrel protein MDM10. The MDM12-MMM1 subcomplex functions in the major beta-barrel assembly pathway that is responsible for biogenesis of all mitochondrial outer membrane beta-barrel proteins, and acts in a late step after the SAM complex. The MDM10-MDM12-MMM1 subcomplex further acts in the TOM40-specific pathway after the action of the MDM12-MMM1 complex. Essential for establishing and maintaining the structure of mitochondria and maintenance of mtDNA nucleoids. This chain is Mitochondrial distribution and morphology protein 12, found in Ajellomyces capsulatus (strain G186AR / H82 / ATCC MYA-2454 / RMSCC 2432) (Darling's disease fungus).